The chain runs to 229 residues: Secreted RxLR effector protein PITG_22926 (229 aa).

Residues 1–23 (MRCNHTLCVVAITFLVSWSQTLS) form the signal peptide. Positions 34–45 (PLVRSVSATEER) match the RxLR-dEER motif.

Belongs to the RxLR effector family.

Its subcellular location is the secreted. It is found in the host nucleus. In terms of biological role, secreted effector that acts as a RNA silencing suppressor, probably by inhibiting the biogenesis of small RNAs in the host plant, to manipulate host immune responses and promote Phytophthora infection. The protein is Secreted RxLR effector protein PITG_22926 of Phytophthora infestans (strain T30-4) (Potato late blight agent).